Consider the following 547-residue polypeptide: Glucose-6-phosphate isomerase (547 aa).

The active-site Proton donor is E350. Residues H381 and K510 contribute to the active site.

It belongs to the GPI family.

It is found in the cytoplasm. It catalyses the reaction alpha-D-glucose 6-phosphate = beta-D-fructose 6-phosphate. Its pathway is carbohydrate biosynthesis; gluconeogenesis. It functions in the pathway carbohydrate degradation; glycolysis; D-glyceraldehyde 3-phosphate and glycerone phosphate from D-glucose: step 2/4. Functionally, catalyzes the reversible isomerization of glucose-6-phosphate to fructose-6-phosphate. This is Glucose-6-phosphate isomerase from Mesorhizobium japonicum (strain LMG 29417 / CECT 9101 / MAFF 303099) (Mesorhizobium loti (strain MAFF 303099)).